Here is a 280-residue protein sequence, read N- to C-terminus: uncharacterized protein (280 aa).

CBS domains follow at residues Gln10–Tyr67, Met90–Glu146, Ile154–Phe209, and Met229–Ala280.

This is an uncharacterized protein from Methanocaldococcus jannaschii (strain ATCC 43067 / DSM 2661 / JAL-1 / JCM 10045 / NBRC 100440) (Methanococcus jannaschii).